Here is a 338-residue protein sequence, read N- to C-terminus: Flap endonuclease 1 (338 aa).

Residues methionine 1–arginine 98 are N-domain. Positions 27, 80, 152, 154, 173, 175, and 236 each coordinate Mg(2+). Residues glutamate 116–glycine 257 are I-domain. The interval serine 330–phenylalanine 338 is interaction with PCNA.

The protein belongs to the XPG/RAD2 endonuclease family. FEN1 subfamily. As to quaternary structure, interacts with PCNA. PCNA stimulates the nuclease activity without altering cleavage specificity. The cofactor is Mg(2+).

Functionally, structure-specific nuclease with 5'-flap endonuclease and 5'-3' exonuclease activities involved in DNA replication and repair. During DNA replication, cleaves the 5'-overhanging flap structure that is generated by displacement synthesis when DNA polymerase encounters the 5'-end of a downstream Okazaki fragment. Binds the unpaired 3'-DNA end and kinks the DNA to facilitate 5' cleavage specificity. Cleaves one nucleotide into the double-stranded DNA from the junction in flap DNA, leaving a nick for ligation. Also involved in the base excision repair (BER) pathway. Acts as a genome stabilization factor that prevents flaps from equilibrating into structures that lead to duplications and deletions. Also possesses 5'-3' exonuclease activity on nicked or gapped double-stranded DNA. This is Flap endonuclease 1 from Methanococcoides burtonii (strain DSM 6242 / NBRC 107633 / OCM 468 / ACE-M).